Here is a 1576-residue protein sequence, read N- to C-terminus: Calmodulin-regulated spectrin-associated protein 1 (1576 aa).

The 116-residue stretch at 217 to 332 folds into the Calponin-homology (CH) domain; that stretch reads ESPSHPKVRY…FIAELFWWFE (116 aa). Disordered regions lie at residues 415-447, 549-572, 595-653, and 811-852; these read HPLLPLRQKQQKSVKPEESLNHRDQANSLTRAD, DLELQSVSSRASSQMSTSRLRRPA, KEKH…LESD, and YETK…QNRD. The span at 428-439 shows a compositional bias: basic and acidic residues; sequence VKPEESLNHRDQ. A compositionally biased stretch (low complexity) spans 554 to 566; that stretch reads SVSSRASSQMSTS. Basic and acidic residues predominate over residues 595-611; that stretch reads KEKHMVPKSEEYGEGKQ. Polar residues-rich tracts occupy residues 613 to 626 and 642 to 651; these read GFSSKRQNEGNQSF and RTFTPLSSLE. The segment covering 813–824 has biased composition (low complexity); the sequence is TKSSTSSSQKTT. The segment covering 840–852 has biased composition (basic and acidic residues); that stretch reads QRREQSPGRQNRD. Coiled coils occupy residues 857–889 and 992–1022; these read LASELVQLHMQLEEKRRVIEAQKKKMESLSARQ and DVNECDLSIEKLNETISTLQQAIMKISQQQE. Disordered stretches follow at residues 1108 to 1149, 1178 to 1236, and 1274 to 1422; these read LKSV…RLHN, SSRV…ISDD, and RLRK…DWEN. The span at 1116–1131 shows a compositional bias: low complexity; the sequence is SPSVPTEESPVEVVPE. Residues 1178–1189 show a composition bias toward polar residues; that stretch reads SSRVAGVSTSES. 3 stretches are compositionally biased toward basic and acidic residues: residues 1195-1204, 1225-1236, and 1274-1323; these read VPVDERHKSS, HPEKTKDIISDD, and RLRK…KQEQ. Positions 1254–1315 form a coiled coil; the sequence is ELAKKRAAFL…KARRELIKQE (62 aa). The segment covering 1333–1346 has biased composition (basic residues); it reads PKPKPKSKKTRPKS. Residues 1354 to 1366 show a composition bias toward polar residues; the sequence is SDSGTKYSSTPDN. Residues 1367-1382 are compositionally biased toward low complexity; it reads LSSAQSGSSLSLASGA. Over residues 1383–1394 the composition is skewed to polar residues; sequence TTEAESVHSGGT. The 135-residue stretch at 1437-1571 folds into the CKK domain; that stretch reads GPKLYKEPSS…QAKRPALPKK (135 aa).

It belongs to the CAMSAP1 family.

Its subcellular location is the cytoplasm. The protein localises to the cytoskeleton. Key microtubule-organizing protein that specifically binds the minus-end of non-centrosomal microtubules and regulates their dynamics and organization. Specifically recognizes growing microtubule minus-ends and stabilizes microtubules. Acts on free microtubule minus-ends that are not capped by microtubule-nucleating proteins or other factors and protects microtubule minus-ends from depolymerization. In contrast to camsap2 and camsap3, tracks along the growing tips of minus-end microtubules without significantly affecting the polymerization rate: binds at the very tip of the microtubules minus-end and acts as a minus-end tracking protein (-TIP) that dissociates from microtubules after allowing tubulin incorporation. Through interaction with spectrin may regulate neurite outgrowth. In Xenopus laevis (African clawed frog), this protein is Calmodulin-regulated spectrin-associated protein 1 (camsap1).